The following is a 130-amino-acid chain: Blasticidin-S deaminase (130 aa).

Positions M1–E129 constitute a CMP/dCMP-type deaminase domain. Residue S28 coordinates substrate. C54 is a binding site for Zn(2+). E56 (proton donor) is an active-site residue. R82 is a binding site for substrate. Zn(2+) contacts are provided by C88 and C91. Substrate contacts are provided by Y126 and W128.

Belongs to the cytidine and deoxycytidylate deaminase family. In terms of assembly, homotetramer. It depends on Zn(2+) as a cofactor.

It catalyses the reaction blasticidin S + H2O + H(+) = deaminohydroxyblasticidin S + NH4(+). Functionally, catalyzes the deamination of the cytosine moiety of the antibiotics blasticidin S, cytomycin and acetylblasticidin S. The polypeptide is Blasticidin-S deaminase (bsd) (Aspergillus terreus).